The sequence spans 69 residues: DNA-directed RNA polymerase subunit omega (69 aa).

It belongs to the RNA polymerase subunit omega family. As to quaternary structure, the RNAP catalytic core consists of 2 alpha, 1 beta, 1 beta' and 1 omega subunit. When a sigma factor is associated with the core the holoenzyme is formed, which can initiate transcription.

The catalysed reaction is RNA(n) + a ribonucleoside 5'-triphosphate = RNA(n+1) + diphosphate. Its function is as follows. Promotes RNA polymerase assembly. Latches the N- and C-terminal regions of the beta' subunit thereby facilitating its interaction with the beta and alpha subunits. The protein is DNA-directed RNA polymerase subunit omega of Pediococcus pentosaceus (strain ATCC 25745 / CCUG 21536 / LMG 10740 / 183-1w).